The chain runs to 466 residues: Glutamate--tRNA ligase (466 aa).

The 'HIGH' region motif lies at 10–20; sequence PSPTGYLHVGG. Residues Cys-99, Cys-101, Cys-126, and His-128 each coordinate Zn(2+). A 'KMSKS' region motif is present at residues 237–241; sequence RLSKR. Lys-240 is a binding site for ATP.

It belongs to the class-I aminoacyl-tRNA synthetase family. Glutamate--tRNA ligase type 1 subfamily. In terms of assembly, monomer. It depends on Zn(2+) as a cofactor.

The protein localises to the cytoplasm. The catalysed reaction is tRNA(Glu) + L-glutamate + ATP = L-glutamyl-tRNA(Glu) + AMP + diphosphate. Its function is as follows. Catalyzes the attachment of glutamate to tRNA(Glu) in a two-step reaction: glutamate is first activated by ATP to form Glu-AMP and then transferred to the acceptor end of tRNA(Glu). This is Glutamate--tRNA ligase from Trichlorobacter lovleyi (strain ATCC BAA-1151 / DSM 17278 / SZ) (Geobacter lovleyi).